Here is a 243-residue protein sequence, read N- to C-terminus: 1-(5-phosphoribosyl)-5-[(5-phosphoribosylamino)methylideneamino] imidazole-4-carboxamide isomerase (243 aa).

Catalysis depends on Asp10, which acts as the Proton acceptor. The Proton donor role is filled by Asp128.

This sequence belongs to the HisA/HisF family.

It is found in the cytoplasm. It catalyses the reaction 1-(5-phospho-beta-D-ribosyl)-5-[(5-phospho-beta-D-ribosylamino)methylideneamino]imidazole-4-carboxamide = 5-[(5-phospho-1-deoxy-D-ribulos-1-ylimino)methylamino]-1-(5-phospho-beta-D-ribosyl)imidazole-4-carboxamide. It participates in amino-acid biosynthesis; L-histidine biosynthesis; L-histidine from 5-phospho-alpha-D-ribose 1-diphosphate: step 4/9. This chain is 1-(5-phosphoribosyl)-5-[(5-phosphoribosylamino)methylideneamino] imidazole-4-carboxamide isomerase, found in Helicobacter hepaticus (strain ATCC 51449 / 3B1).